The following is a 175-amino-acid chain: Nucleoside diphosphate kinase 6 (175 aa).

Positions 8, 57, 85, 91, 105, and 115 each coordinate ATP. The active-site Pros-phosphohistidine intermediate is histidine 118.

Belongs to the NDK family. Mg(2+) is required as a cofactor.

The enzyme catalyses a 2'-deoxyribonucleoside 5'-diphosphate + ATP = a 2'-deoxyribonucleoside 5'-triphosphate + ADP. It carries out the reaction a ribonucleoside 5'-diphosphate + ATP = a ribonucleoside 5'-triphosphate + ADP. In terms of biological role, major role in the synthesis of nucleoside triphosphates other than ATP. The ATP gamma phosphate is transferred to the NDP beta phosphate via a ping-pong mechanism, using a phosphorylated active-site intermediate. The sequence is that of Nucleoside diphosphate kinase 6 (Nme6) from Rattus norvegicus (Rat).